Here is a 602-residue protein sequence, read N- to C-terminus: Translation initiation factor IF-2 (602 aa).

The tr-type G domain maps to 112–281 (KRAPIITIMG…LLLCEVLDLK (170 aa)). Residues 121–128 (GHVDHGKT) form a G1 region. 121–128 (GHVDHGKT) contacts GTP. The G2 stretch occupies residues 146 to 150 (GITQH). The G3 stretch occupies residues 167 to 170 (DTPG). Residues 167-171 (DTPGH) and 221-224 (NKMD) contribute to the GTP site. Residues 221 to 224 (NKMD) are G4. Residues 257–259 (SAL) are G5.

This sequence belongs to the TRAFAC class translation factor GTPase superfamily. Classic translation factor GTPase family. IF-2 subfamily.

It is found in the cytoplasm. One of the essential components for the initiation of protein synthesis. Protects formylmethionyl-tRNA from spontaneous hydrolysis and promotes its binding to the 30S ribosomal subunits. Also involved in the hydrolysis of GTP during the formation of the 70S ribosomal complex. The protein is Translation initiation factor IF-2 of Mycoplasmopsis synoviae (strain 53) (Mycoplasma synoviae).